A 258-amino-acid polypeptide reads, in one-letter code: 5'-nucleotidase SurE (258 aa).

Aspartate 9, aspartate 10, serine 42, and asparagine 96 together coordinate a divalent metal cation.

The protein belongs to the SurE nucleotidase family. Requires a divalent metal cation as cofactor.

The protein localises to the cytoplasm. The catalysed reaction is a ribonucleoside 5'-phosphate + H2O = a ribonucleoside + phosphate. Its function is as follows. Nucleotidase that shows phosphatase activity on nucleoside 5'-monophosphates. The chain is 5'-nucleotidase SurE from Campylobacter jejuni subsp. jejuni serotype O:6 (strain 81116 / NCTC 11828).